We begin with the raw amino-acid sequence, 475 residues long: Ribosomal protein uS12 methylthiotransferase RimO (475 aa).

Residues 5–114 (RTVRLIRLGC…IAQRLEDVLA (110 aa)) form the MTTase N-terminal domain. The [4Fe-4S] cluster site is built by Cys-14, Cys-49, Cys-78, Cys-174, Cys-178, and Cys-181. The Radical SAM core domain occupies 160–390 (LDDSPVAPLK…AGIAEEVTAD (231 aa)). The 69-residue stretch at 393–461 (RARLGETVDV…GVDFLAAPVT (69 aa)) folds into the TRAM domain.

This sequence belongs to the methylthiotransferase family. RimO subfamily. [4Fe-4S] cluster serves as cofactor.

The protein resides in the cytoplasm. The enzyme catalyses L-aspartate(89)-[ribosomal protein uS12]-hydrogen + (sulfur carrier)-SH + AH2 + 2 S-adenosyl-L-methionine = 3-methylsulfanyl-L-aspartate(89)-[ribosomal protein uS12]-hydrogen + (sulfur carrier)-H + 5'-deoxyadenosine + L-methionine + A + S-adenosyl-L-homocysteine + 2 H(+). In terms of biological role, catalyzes the methylthiolation of an aspartic acid residue of ribosomal protein uS12. The polypeptide is Ribosomal protein uS12 methylthiotransferase RimO (Acidothermus cellulolyticus (strain ATCC 43068 / DSM 8971 / 11B)).